Reading from the N-terminus, the 465-residue chain is Argininosuccinate lyase (465 aa).

The protein belongs to the lyase 1 family. Argininosuccinate lyase subfamily.

It is found in the cytoplasm. It carries out the reaction 2-(N(omega)-L-arginino)succinate = fumarate + L-arginine. It functions in the pathway amino-acid biosynthesis; L-arginine biosynthesis; L-arginine from L-ornithine and carbamoyl phosphate: step 3/3. This Halorhodospira halophila (strain DSM 244 / SL1) (Ectothiorhodospira halophila (strain DSM 244 / SL1)) protein is Argininosuccinate lyase.